The following is a 632-amino-acid chain: Sporulenol synthase (632 aa).

The active-site Proton donor is Asp377. PFTB repeat units follow at residues 395–436 (WERG…EDAA), 465–505 (IQRA…HACG), and 513–554 (IQKA…VQTA).

It belongs to the terpene cyclase/mutase family.

The protein resides in the cell membrane. The enzyme catalyses sporulenol = (R)-tetraprenyl-beta-curcumene + H2O. It participates in secondary metabolite biosynthesis; hopanoid biosynthesis. Its function is as follows. Catalyzes the cyclization of tetraprenyl beta-curcumene into sporulenol. In Bacillus subtilis (strain 168), this protein is Sporulenol synthase (sqhC).